The sequence spans 173 residues: Mesencephalic astrocyte-derived neurotrophic factor homolog (173 aa).

The first 22 residues, 1-22, serve as a signal peptide directing secretion; the sequence is MNTSHIVLMICFIVGVGQTALA. 4 disulfides stabilise this stretch: C28–C114, C31–C103, C61–C72, and C148–C151.

The protein belongs to the ARMET family.

The protein resides in the secreted. Functionally, required during the maturation of the embryonic nervous system for maintenance of neuronal and cuticular connectivity. Essential for maintenance of dopaminergic neurons and dopamine levels. This Drosophila virilis (Fruit fly) protein is Mesencephalic astrocyte-derived neurotrophic factor homolog.